The chain runs to 476 residues: Cobyric acid synthase (476 aa).

The GATase cobBQ-type domain occupies 242–428 (AFRVVVPVPP…LHGLFDTPDA (187 aa)). Cysteine 323 acts as the Nucleophile in catalysis. Histidine 420 is an active-site residue.

It belongs to the CobB/CobQ family. CobQ subfamily.

It functions in the pathway cofactor biosynthesis; adenosylcobalamin biosynthesis. In terms of biological role, catalyzes amidations at positions B, D, E, and G on adenosylcobyrinic A,C-diamide. NH(2) groups are provided by glutamine, and one molecule of ATP is hydrogenolyzed for each amidation. The protein is Cobyric acid synthase of Janthinobacterium sp. (strain Marseille) (Minibacterium massiliensis).